The sequence spans 393 residues: Na(+)/H(+) antiporter NhaA (393 aa).

12 consecutive transmembrane segments (helical) span residues 23–43, 58–78, 96–116, 126–146, 155–175, 178–198, 201–221, 224–244, 265–285, 298–318, 334–354, and 367–387; these read AGGITLMAAAALALIVANSPF, LSLAHWINDALMAKFFLLVGL, MLPGIAAAGGVILPAIIFAVL, GWAVPSATDIAFALGVLSLLG, VFLATLAILDDLAAVVIIAIF, AEISMPYLGAAFITAAVLFVM, MGVVKLLPYLISAVILWFFVF, GVHATVAGVVAALMIPLKPAP, VAFIVVPIFGFANAGISFKGL, ILLGLFLGKQFGVFGAAWLAI, LYGVAILCGIGFTMSIFIGLL, and IGVLSGSALSAICGYLLLRAA.

It belongs to the NhaA Na(+)/H(+) (TC 2.A.33) antiporter family.

It is found in the cell inner membrane. It catalyses the reaction Na(+)(in) + 2 H(+)(out) = Na(+)(out) + 2 H(+)(in). In terms of biological role, na(+)/H(+) antiporter that extrudes sodium in exchange for external protons. The chain is Na(+)/H(+) antiporter NhaA from Brucella suis (strain ATCC 23445 / NCTC 10510).